A 224-amino-acid polypeptide reads, in one-letter code: Response regulator protein GraR (224 aa).

In terms of domain architecture, Response regulatory spans 2-115 (QILLVEDDNT…VLIAKLQAIY (114 aa)). A 4-aspartylphosphate modification is found at Asp51. Positions 126–224 (KRTLTWQDAV…KVGKGYMAHE (99 aa)) form a DNA-binding region, ompR/PhoB-type. Thr128, Thr130, and Thr149 each carry phosphothreonine.

In terms of assembly, interacts with GraX. Post-translationally, phosphorylated by GraS. Phosphorylated by Stk1; phosphorylation increases the DNA-binding activity of GraR.

The protein resides in the cytoplasm. In terms of biological role, member of the two-component regulatory system GraR/GraS involved in resistance against cationic antimicrobial peptides (CAMPs). Upon phosphorylation by GraS, functions as a transcription regulator by direct binding to promoter regions of target genes such as adhesins, exoproteins, transporters, toxins, and proteins involved in cell wall synthesis. Down-regulates the expression of many genes involved in RNA and amino acid synthesis or glycolysis. This Staphylococcus aureus (strain MRSA252) protein is Response regulator protein GraR (graR).